The chain runs to 561 residues: MANRPSLMPPHNETEHSVSRITREGKQLTYKLSVMQQPERARACGAGAKSSADRRPVDPPPVVELRIFESDPANDTQKTDITFAYNANFFLYATLETARPIAHGRVGGPQSCPVLTGVPVAGVAYLDRPSQAGYFIFPDLSVRHEGRYRLSFHLYEEIKDAKDADKDSTLPLPNQIPLSATSKPGIPQAFLHFRLEVKSVPFTVYSAKKFPGLATSTSLSRIIAEQGCRVRIRRDVRMRRRGDKRDEDYEFGEERAAAYARSSDRFTTPDRYAASMDRPRSNSNGSNIESPYGFVPPDRRPSAPDYGFQCPQPYQRPMPPAPMSHSQTPSYQSHLSFGSTPSHYPAPHMPPTPPPVAPQGIYSPQHAYAQIRHPSNGSEYEGTPIAYPAPQIPVERGGYPKPPMSSYAMDPPKPNSYMDPRMPEPSLYPSTPNVPVSRPQTPNLPAMPPPKPLSNDYANHVVPSVECTSPGGSGGGGYDNVRGKRMVYQTGPTYGKRSHEDTFGLDDRSMQNGMRPDTEPYPAYRDFSGESRAALMAEMGIQLSYKRANGKIVMKAPPSST.

Disordered regions lie at residues 1–23 (MANRPSLMPPHNETEHSVSRITR), 41–60 (ARACGAGAKSSADRRPVDPP), and 258–361 (AYAR…PQGI). Positions 12–23 (NETEHSVSRITR) are enriched in basic and acidic residues. The region spanning 25–233 (GKQLTYKLSV…AEQGCRVRIR (209 aa)) is the Velvet domain. The Nuclear localization signal signature appears at 39–44 (ERARAC). Basic and acidic residues predominate over residues 258-268 (AYARSSDRFTT). Over residues 324-339 (SHSQTPSYQSHLSFGS) the composition is skewed to polar residues. A compositionally biased stretch (pro residues) spans 347–357 (PHMPPTPPPVA). The tract at residues 438 to 485 (RPQTPNLPAMPPPKPLSNDYANHVVPSVECTSPGGSGGGGYDNVRGKR) is PEST. The tract at residues 491–524 (GPTYGKRSHEDTFGLDDRSMQNGMRPDTEPYPAY) is disordered. Basic and acidic residues predominate over residues 497 to 509 (RSHEDTFGLDDRS).

Belongs to the velvet family. VeA subfamily. In terms of assembly, component of the heterotrimeric velvet complex composed of laeA, veA and velB; velA acting as a bridging protein between laeA and velB. Interacts with kapA. Interacts with vosA and velc.

The protein resides in the nucleus. It is found in the cytoplasm. Component of the velvet transcription factor complex that controls sexual/asexual developmental ratio in response to light, promoting sexual development in the darkness while stimulating asexual sporulation under illumination. The velvet complex acts as a global regulator for secondary metabolite gene expression. Controls the expression of the penicillin gene cluster. Positively controls the expression of the class V chitinase chiB1. Positively controls the expression of the transcription factor atfA. Required for cell wall integrity and controls hyphal branching. The protein is Developmental and secondary metabolism regulator veA of Penicillium rubens (strain ATCC 28089 / DSM 1075 / NRRL 1951 / Wisconsin 54-1255) (Penicillium chrysogenum).